Here is a 367-residue protein sequence, read N- to C-terminus: Pectate lyase 1 (367 aa).

Positions M1–S21 are cleaved as a signal peptide. Cysteines 28 and 45 form a disulfide. Residues N38–G305 form a beta-helix region. The igE-binding. Binds to IgE in 5 out of 7 patients tested stretch occupies residues I92 to P104. C128 and C147 are joined by a disulfide. N148 carries an N-linked (GlcNAc...) asparagine glycan. Residue D170 participates in Ca(2+) binding. Residue N178 is glycosylated (N-linked (GlcNAc...) asparagine). 2 residues coordinate Ca(2+): D194 and D198. The igE-binding. Binds to IgE in 6 out of 7 patients tested stretch occupies residues A239–R250. R250 is a catalytic residue. The segment at M251–L258 is igE-binding. Binds to IgE in 5 out of 7 patients tested. C306 and C312 form a disulfide bridge. Residues W317–G327 are igE-binding. Binds to IgE in 3 out of 7 patients tested.

This sequence belongs to the polysaccharide lyase 1 family. Amb a subfamily. Ca(2+) serves as cofactor. In terms of processing, N-glycosylated; consists of complex-type N-glycans containing the Lewis a antigen (Galbeta1-3(Fucalpha1-4)GlcNAcbeta1-). As to expression, expressed in pollen (at protein level).

It carries out the reaction Eliminative cleavage of (1-&gt;4)-alpha-D-galacturonan to give oligosaccharides with 4-deoxy-alpha-D-galact-4-enuronosyl groups at their non-reducing ends.. It functions in the pathway glycan metabolism; pectin degradation; 2-dehydro-3-deoxy-D-gluconate from pectin: step 2/5. Has low pectate lyase activity. The polypeptide is Pectate lyase 1 (Juniperus ashei (Ozark white cedar)).